The primary structure comprises 65 residues: uncharacterized protein (65 aa).

The helical transmembrane segment at 37-57 threads the bilayer; sequence ILAIMTSVLPVLLIYIIWIFI.

It localises to the cell membrane. This is an uncharacterized protein from Bacillus subtilis (strain 168).